An 89-amino-acid chain; its full sequence is MNLPTVLCIIALILGVRSAKNGFFTKLGKPIVCDDINFVGNYCQTKCVKAGANNGFCCQQKCYCLGLNDYAPTLQVADSSEKACQAMSG.

Residues 1–18 (MNLPTVLCIIALILGVRS) form the signal peptide. The LCN-type CS-alpha/beta domain maps to 20–85 (KNGFFTKLGK…VADSSEKACQ (66 aa)). 4 disulfides stabilise this stretch: Cys-33-Cys-57, Cys-43-Cys-62, Cys-47-Cys-64, and Cys-58-Cys-84.

The protein belongs to the long (4 C-C) scorpion toxin superfamily. Sodium channel inhibitor family. Beta subfamily. In terms of tissue distribution, expressed by the venom gland.

The protein resides in the secreted. Its function is as follows. Binds voltage-independently at site-4 of sodium channels (Nav) and shift the voltage of activation toward more negative potentials thereby affecting sodium channel activation and promoting spontaneous and repetitive firing. The chain is Neurotoxin LmNaTx28 from Lychas mucronatus (Chinese swimming scorpion).